Here is a 351-residue protein sequence, read N- to C-terminus: Protein FAM118B (351 aa).

An N-acetylalanine modification is found at Ala2. Phosphoserine is present on Ser9.

The protein belongs to the FAM118 family.

It is found in the nucleus. It localises to the cajal body. Its function is as follows. May play a role in Cajal bodies formation. This Bos taurus (Bovine) protein is Protein FAM118B (FAM118B).